The following is a 474-amino-acid chain: tRNA-2-methylthio-N(6)-dimethylallyladenosine synthase (474 aa).

The MTTase N-terminal domain maps to 3 to 120 (QKLHIKTWGC…LPEMINQIRA (118 aa)). 6 residues coordinate [4Fe-4S] cluster: Cys12, Cys49, Cys83, Cys157, Cys161, and Cys164. A Radical SAM core domain is found at 143–375 (KAEGPTAFVS…QQRINNQAAQ (233 aa)). In terms of domain architecture, TRAM spans 378–441 (RAMLGTEQRV…TNSLRGDVVR (64 aa)).

The protein belongs to the methylthiotransferase family. MiaB subfamily. In terms of assembly, monomer. The cofactor is [4Fe-4S] cluster.

The protein localises to the cytoplasm. It catalyses the reaction N(6)-dimethylallyladenosine(37) in tRNA + (sulfur carrier)-SH + AH2 + 2 S-adenosyl-L-methionine = 2-methylsulfanyl-N(6)-dimethylallyladenosine(37) in tRNA + (sulfur carrier)-H + 5'-deoxyadenosine + L-methionine + A + S-adenosyl-L-homocysteine + 2 H(+). In terms of biological role, catalyzes the methylthiolation of N6-(dimethylallyl)adenosine (i(6)A), leading to the formation of 2-methylthio-N6-(dimethylallyl)adenosine (ms(2)i(6)A) at position 37 in tRNAs that read codons beginning with uridine. This chain is tRNA-2-methylthio-N(6)-dimethylallyladenosine synthase, found in Mannheimia succiniciproducens (strain KCTC 0769BP / MBEL55E).